The sequence spans 455 residues: Proline--tRNA ligase (455 aa).

Positions 101, 103, and 132 each coordinate L-proline. 4 residues coordinate ATP: arginine 132, glutamate 134, glutamine 216, and threonine 219. Histidine 221 serves as a coordination point for L-proline. The ATP site is built by serine 253 and arginine 255. Residues 329-359 (EIKGVPLRIEVGPKDIENKKITLFRRDTMEK) form an interaction with tRNA region.

The protein belongs to the class-II aminoacyl-tRNA synthetase family. ProS type 3 subfamily. As to quaternary structure, homodimer. The dimer is functionally asymmetric: only one of the two active sites at a time is able to form prolyl-adenylate, and only one tRNA molecule binds per dimer.

It is found in the cytoplasm. It carries out the reaction tRNA(Pro) + L-proline + ATP = L-prolyl-tRNA(Pro) + AMP + diphosphate. Inhibited by high concentrations of prolinamide. Functionally, catalyzes the attachment of proline to tRNA(Pro) in a two-step reaction: proline is first activated by ATP to form Pro-AMP and then transferred to the acceptor end of tRNA(Pro). Can inadvertently accommodate and process non-cognate amino acids such as cysteine and alanine. This is Proline--tRNA ligase (proS) from Methanocaldococcus jannaschii (strain ATCC 43067 / DSM 2661 / JAL-1 / JCM 10045 / NBRC 100440) (Methanococcus jannaschii).